Consider the following 355-residue polypeptide: MFADKLRPFLDRYNEISALLGDPNIINDIEKMTKLSKEQSSIEPIKNAASQYLQTLDDIEENKALLDDAELGELAREELKSAQIRKEELENEIKILLLPKDPNDDKNIFLEIRAGTGGDEAALFVGDLFNAYIRYADLRGYKFEIVSQSEGSAGGFKEIILLIKGKGAYSRLKFEGGTHRVQRVPETESQGRVHTSAVTVAIMPEVEDSEIEINPNDLRIDVMRSSGHGGQSVNTTDSAVRITHIPTGLVVTNQDGKSQHKNKEAAMKVLKARLYEMQEAERIAKETSERKSQVGTGDRSGRIRTYNFPQNRISDHRINLTLYRLDAIMAGGLFDEIIEPLIAHHQAEAITDAGL.

Gln231 is modified (N5-methylglutamine). The span at 283 to 292 (IAKETSERKS) shows a compositional bias: basic and acidic residues. The disordered stretch occupies residues 283–303 (IAKETSERKSQVGTGDRSGRI).

It belongs to the prokaryotic/mitochondrial release factor family. Post-translationally, methylated by PrmC. Methylation increases the termination efficiency of RF1.

It is found in the cytoplasm. Peptide chain release factor 1 directs the termination of translation in response to the peptide chain termination codons UAG and UAA. This chain is Peptide chain release factor 1, found in Campylobacter curvus (strain 525.92).